The following is a 150-amino-acid chain: MESTGKVKKAFGGRKPPGAPKTKSVSKSMKAGLQFPVGRITRFLKKGRYAQRLGGGAPVYMAAVLEYLAAEVLELAGNAARDNKKSRIIPRHLLLAIRNDEELGKLLSGVTIAHGGVLPNINSVLLPKKSATKPAEEKATKSPVKSPKKA.

Basic residues predominate over residues 1–12 (MESTGKVKKAFG). Disordered regions lie at residues 1 to 27 (MEST…SVSK) and 129 to 150 (KSAT…PKKA). Ser146 carries the phosphoserine modification. Residues 146 to 149 (SPKK) carry the SPKK motif motif.

Belongs to the histone H2A family. As to quaternary structure, the nucleosome is a histone octamer containing two molecules each of H2A, H2B, H3 and H4 assembled in one H3-H4 heterotetramer and two H2A-H2B heterodimers. The octamer wraps approximately 147 bp of DNA. Post-translationally, not ubiquitinated. As to expression, strong expression through-out the roots and leaves. Also found in meristems and dividing cells.

It is found in the nucleus. The protein resides in the chromosome. Its function is as follows. Core component of nucleosome. Nucleosomes wrap and compact DNA into chromatin, limiting DNA accessibility to the cellular machineries which require DNA as a template. Histones thereby play a central role in transcription regulation, DNA repair, DNA replication and chromosomal stability. DNA accessibility is regulated via a complex set of post-translational modifications of histones, also called histone code, and nucleosome remodeling. The protein is Probable histone H2A.7 of Arabidopsis thaliana (Mouse-ear cress).